Reading from the N-terminus, the 250-residue chain is ATP synthase subunit a (250 aa).

Helical transmembrane passes span 29-49, 84-104, 114-134, 143-163, 193-213, and 216-236; these read ASLF…FATS, FFPL…LGMF, IIVT…YGFY, VFVP…IEII, FVAS…LPLI, and VALT…FAVL.

The protein belongs to the ATPase A chain family. As to quaternary structure, F-type ATPases have 2 components, CF(1) - the catalytic core - and CF(0) - the membrane proton channel. CF(1) has five subunits: alpha(3), beta(3), gamma(1), delta(1), epsilon(1). CF(0) has three main subunits: a(1), b(2) and c(9-12). The alpha and beta chains form an alternating ring which encloses part of the gamma chain. CF(1) is attached to CF(0) by a central stalk formed by the gamma and epsilon chains, while a peripheral stalk is formed by the delta and b chains.

Its subcellular location is the cell inner membrane. Key component of the proton channel; it plays a direct role in the translocation of protons across the membrane. This Rhizobium johnstonii (strain DSM 114642 / LMG 32736 / 3841) (Rhizobium leguminosarum bv. viciae) protein is ATP synthase subunit a.